Here is a 296-residue protein sequence, read N- to C-terminus: MATVQPIVNSHLSELDEDVFHHFGFTTKSFDFKEKFGDVKFVCVCGSSGRIHNFAISMAKLAGLALPVENIAGSHARFVLYKVDHILFADHGIGIPSTLILMHEVTKLLYYAGCKDVLFIRLGTSDGLGVKPGTIVLSDRCVNTKLEPYNELCILGKPVRRQTKVDSNAVNELKKLSENLSLKCSVVVGGTITANDFYEELGRLNGSICTFSKEEKLAFLQSVYDHGIRNMEMEGAAITSHCNLTGHRAILVCVTVVNRLETDEVTTSTDEFKLFEQLPGQLVGEYLKRNNGIIVR.

Belongs to the PNP/UDP phosphorylase family. Homodimer.

The chain is Inactive uridine phosphorylase B from Schistosoma mansoni (Blood fluke).